The chain runs to 173 residues: Ribosome maturation factor RimM (173 aa).

Residues 96–169 (PDEYYDHQLE…LVEIDPPEGL (74 aa)) enclose the PRC barrel domain.

The protein belongs to the RimM family. Binds ribosomal protein uS19.

Its subcellular location is the cytoplasm. In terms of biological role, an accessory protein needed during the final step in the assembly of 30S ribosomal subunit, possibly for assembly of the head region. Essential for efficient processing of 16S rRNA. May be needed both before and after RbfA during the maturation of 16S rRNA. It has affinity for free ribosomal 30S subunits but not for 70S ribosomes. The chain is Ribosome maturation factor RimM from Mycobacterium sp. (strain JLS).